The following is a 23-amino-acid chain: Phallacidin proprotein (23 aa).

Pro1 is a propeptide. Positions 2 to 8 (AWLVDCP) form a cross-link, cyclopeptide (Ala-Pro). The segment at residues 3–7 (WLVDC) is a cross-link (2'-cysteinyl-6'-hydroxytryptophan sulfoxide (Trp-Cys)). The propeptide occupies 9 to 23 (CVGDDISRLLTRGEK).

The protein belongs to the MSDIN fungal toxin family. In terms of processing, processed by the macrocyclase-peptidase enzyme POPB to yield a toxic cyclic heptapeptide. POPB first removes 10 residues from the N-terminus. Conformational trapping of the remaining peptide forces the enzyme to release this intermediate rather than proceed to macrocyclization. The enzyme rebinds the remaining peptide in a different conformation and catalyzes macrocyclization of the N-terminal 7 residues.

In terms of biological role, major toxin that belongs to the bicyclic heptapeptides called phallotoxins. Although structurally related to amatoxins, phallotoxins have a different mode of action, which is the stabilization of F-actin. Phallotoxins are poisonous when administered parenterally, but not orally because of poor absorption. In Amanita rimosa, this protein is Phallacidin proprotein.